An 88-amino-acid chain; its full sequence is MKEKDNFEMVINLRKIKTGKRTGRSKRAVKFVRKIVARHFNADKVVIDPLLAKSISKNGNDKVVSKVRVVVSKVGEKIYLVRLAIKSR.

It belongs to the eukaryotic ribosomal protein eL31 family.

The chain is Large ribosomal subunit protein eL31 from Saccharolobus islandicus (strain Y.N.15.51 / Yellowstone #2) (Sulfolobus islandicus).